We begin with the raw amino-acid sequence, 100 residues long: Envelope glycoprotein N (100 aa).

The signal sequence occupies residues 1–27 (MLSTRFVTLAILACLLVVLGLARGAGG). The Virion surface portion of the chain corresponds to 28–63 (DPGVKQRIDVAREEERRDFWHAACSGHGFPITTPST). Residues 64 to 84 (AAILFYVSLLAVGVAVACQAY) traverse the membrane as a helical segment. The Intravirion segment spans residues 85–100 (RAVLRIVTLEMLQHLH).

The protein belongs to the herpesviridae glycoprotein N family. As to quaternary structure, interacts (via N-terminus) with gM (via N-terminus). The gM-gN heterodimer forms the gCII complex.

It localises to the virion membrane. The protein resides in the host membrane. It is found in the host Golgi apparatus. The protein localises to the host trans-Golgi network. Functionally, envelope glycoprotein necessary for proper maturation of gM and modulation of its membrane fusion activity. Also plays a critical role in virion morphogenesis. This is Envelope glycoprotein N from Equus caballus (Horse).